A 189-amino-acid chain; its full sequence is UPF0301 protein bbp_491 (189 aa).

Belongs to the UPF0301 (AlgH) family.

The protein is UPF0301 protein bbp_491 of Buchnera aphidicola subsp. Baizongia pistaciae (strain Bp).